Consider the following 570-residue polypeptide: Sulfite reductase [NADPH] hemoprotein beta-component (570 aa).

The [4Fe-4S] cluster site is built by Cys-434, Cys-440, Cys-479, and Cys-483. Residue Cys-483 participates in siroheme binding.

This sequence belongs to the nitrite and sulfite reductase 4Fe-4S domain family. In terms of assembly, alpha(8)-beta(8). The alpha component is a flavoprotein, the beta component is a hemoprotein. The cofactor is siroheme. [4Fe-4S] cluster serves as cofactor.

It carries out the reaction hydrogen sulfide + 3 NADP(+) + 3 H2O = sulfite + 3 NADPH + 4 H(+). Its pathway is sulfur metabolism; hydrogen sulfide biosynthesis; hydrogen sulfide from sulfite (NADPH route): step 1/1. In terms of biological role, component of the sulfite reductase complex that catalyzes the 6-electron reduction of sulfite to sulfide. This is one of several activities required for the biosynthesis of L-cysteine from sulfate. This Escherichia coli O9:H4 (strain HS) protein is Sulfite reductase [NADPH] hemoprotein beta-component.